The sequence spans 160 residues: MPSFDIVSEIDTSELQNAVDNANRELATRFDFRGVKASLSITNDVAKLSAEHDSQLRQLMDLLRTNLIKRGVDSRAMDPETPNHTGKTWTQVIKFKEGVDQPTSKKLIKLIKDNKMKVQVAVQGEQLRVTGKKRDDLQAVMTLIKGTELDQAFQFNNFRD.

The protein belongs to the YajQ family.

Its function is as follows. Nucleotide-binding protein. The chain is Nucleotide-binding protein Ping_2261 from Psychromonas ingrahamii (strain DSM 17664 / CCUG 51855 / 37).